Reading from the N-terminus, the 275-residue chain is 2,3,4,5-tetrahydropyridine-2,6-dicarboxylate N-succinyltransferase (275 aa).

Substrate-binding residues include Arg106 and Asp143.

The protein belongs to the transferase hexapeptide repeat family. As to quaternary structure, homotrimer.

Its subcellular location is the cytoplasm. It carries out the reaction (S)-2,3,4,5-tetrahydrodipicolinate + succinyl-CoA + H2O = (S)-2-succinylamino-6-oxoheptanedioate + CoA. The protein operates within amino-acid biosynthesis; L-lysine biosynthesis via DAP pathway; LL-2,6-diaminopimelate from (S)-tetrahydrodipicolinate (succinylase route): step 1/3. The protein is 2,3,4,5-tetrahydropyridine-2,6-dicarboxylate N-succinyltransferase of Cupriavidus pinatubonensis (strain JMP 134 / LMG 1197) (Cupriavidus necator (strain JMP 134)).